Here is a 368-residue protein sequence, read N- to C-terminus: uncharacterized protein (368 aa).

This is an uncharacterized protein from Archaeoglobus fulgidus (strain ATCC 49558 / DSM 4304 / JCM 9628 / NBRC 100126 / VC-16).